We begin with the raw amino-acid sequence, 233 residues long: Protein DOUBLE-STRAND BREAK FORMATION (233 aa).

Interacts with PRD1; this interaction facilitates a binding to PRD3. In terms of tissue distribution, specifically expressed in buds.

Its function is as follows. Required for meiotic double-strand break (DSB) formation, the initial event for meiotic recombination. The chain is Protein DOUBLE-STRAND BREAK FORMATION from Arabidopsis thaliana (Mouse-ear cress).